We begin with the raw amino-acid sequence, 386 residues long: Probable Xaa-Pro aminopeptidase PMAA_074180 (386 aa).

4 residues coordinate Mn(2+): Asp-160, Asp-171, Glu-311, and Glu-350.

The protein belongs to the peptidase M24B family. It depends on Mn(2+) as a cofactor.

It carries out the reaction Release of any N-terminal amino acid, including proline, that is linked to proline, even from a dipeptide or tripeptide.. Catalyzes the removal of a penultimate prolyl residue from the N-termini of peptides. The polypeptide is Probable Xaa-Pro aminopeptidase PMAA_074180 (Talaromyces marneffei (strain ATCC 18224 / CBS 334.59 / QM 7333) (Penicillium marneffei)).